A 98-amino-acid polypeptide reads, in one-letter code: Small ribosomal subunit protein bS16 (98 aa).

Belongs to the bacterial ribosomal protein bS16 family.

The protein is Small ribosomal subunit protein bS16 of Pseudothermotoga lettingae (strain ATCC BAA-301 / DSM 14385 / NBRC 107922 / TMO) (Thermotoga lettingae).